Reading from the N-terminus, the 288-residue chain is Elongation factor Ts (288 aa).

The tract at residues 79–82 (TDFV) is involved in Mg(2+) ion dislocation from EF-Tu.

Belongs to the EF-Ts family.

It is found in the cytoplasm. Associates with the EF-Tu.GDP complex and induces the exchange of GDP to GTP. It remains bound to the aminoacyl-tRNA.EF-Tu.GTP complex up to the GTP hydrolysis stage on the ribosome. This is Elongation factor Ts from Ehrlichia canis (strain Jake).